Here is a 431-residue protein sequence, read N- to C-terminus: Putative serine/threonine-protein kinase B (431 aa).

The 260-residue stretch at 20-279 folds into the Protein kinase domain; the sequence is YLNKGIVGLG…VRENFQIPYI (260 aa). ATP contacts are provided by residues 26–34 and K49; that span reads VGLGSYGEG. D147 acts as the Proton acceptor in catalysis. One can recognise a PH domain in the interval 331–429; it reads DVTHRGHVNK…WVHAIQRGIG (99 aa).

Belongs to the protein kinase superfamily. Ser/Thr protein kinase family.

The enzyme catalyses L-seryl-[protein] + ATP = O-phospho-L-seryl-[protein] + ADP + H(+). It catalyses the reaction L-threonyl-[protein] + ATP = O-phospho-L-threonyl-[protein] + ADP + H(+). The chain is Putative serine/threonine-protein kinase B (NRKB) from Trypanosoma brucei brucei.